A 92-amino-acid polypeptide reads, in one-letter code: UPF0473 protein Cbei_1107 (92 aa).

The protein belongs to the UPF0473 family.

This chain is UPF0473 protein Cbei_1107, found in Clostridium beijerinckii (strain ATCC 51743 / NCIMB 8052) (Clostridium acetobutylicum).